A 142-amino-acid chain; its full sequence is FAD synthase (142 aa).

ATP contacts are provided by residues 9–10 (TF), 14–17 (HPGH), and Asp-92.

This sequence belongs to the archaeal FAD synthase family. In terms of assembly, homodimer. It depends on a divalent metal cation as a cofactor.

The catalysed reaction is FMN + ATP + H(+) = FAD + diphosphate. Its pathway is cofactor biosynthesis; FAD biosynthesis; FAD from FMN: step 1/1. Functionally, catalyzes the transfer of the AMP portion of ATP to flavin mononucleotide (FMN) to produce flavin adenine dinucleotide (FAD) coenzyme. This is FAD synthase from Haloferax volcanii (strain ATCC 29605 / DSM 3757 / JCM 8879 / NBRC 14742 / NCIMB 2012 / VKM B-1768 / DS2) (Halobacterium volcanii).